Here is a 300-residue protein sequence, read N- to C-terminus: Acetylglutamate kinase (300 aa).

Substrate-binding positions include Gly-73–Gly-74, Arg-95, and Asn-197.

It belongs to the acetylglutamate kinase family. ArgB subfamily.

Its subcellular location is the cytoplasm. The catalysed reaction is N-acetyl-L-glutamate + ATP = N-acetyl-L-glutamyl 5-phosphate + ADP. The protein operates within amino-acid biosynthesis; L-arginine biosynthesis; N(2)-acetyl-L-ornithine from L-glutamate: step 2/4. In terms of biological role, catalyzes the ATP-dependent phosphorylation of N-acetyl-L-glutamate. The protein is Acetylglutamate kinase of Bordetella pertussis (strain Tohama I / ATCC BAA-589 / NCTC 13251).